A 476-amino-acid chain; its full sequence is Ribosomal protein uS12 methylthiotransferase RimO (476 aa).

One can recognise an MTTase N-terminal domain in the interval 7–123 (KSLYMMTLGC…IGDLLAAEAS (117 aa)). The [4Fe-4S] cluster site is built by cysteine 16, cysteine 52, cysteine 86, cysteine 158, cysteine 162, and cysteine 165. The Radical SAM core domain maps to 144–373 (SMPKYTAYLK…MAIQKRINRE (230 aa)). The 69-residue stretch at 376-444 (KKLVGKRLEV…DYDLVARVVE (69 aa)) folds into the TRAM domain. Over residues 445 to 459 (RPDPKQREHTARDAH) the composition is skewed to basic and acidic residues. The disordered stretch occupies residues 445–476 (RPDPKQREHTARDAHPAPLPVAAMQRPAPRAE).

This sequence belongs to the methylthiotransferase family. RimO subfamily. Requires [4Fe-4S] cluster as cofactor.

The protein localises to the cytoplasm. It carries out the reaction L-aspartate(89)-[ribosomal protein uS12]-hydrogen + (sulfur carrier)-SH + AH2 + 2 S-adenosyl-L-methionine = 3-methylsulfanyl-L-aspartate(89)-[ribosomal protein uS12]-hydrogen + (sulfur carrier)-H + 5'-deoxyadenosine + L-methionine + A + S-adenosyl-L-homocysteine + 2 H(+). Catalyzes the methylthiolation of an aspartic acid residue of ribosomal protein uS12. In Myxococcus xanthus (strain DK1622), this protein is Ribosomal protein uS12 methylthiotransferase RimO.